We begin with the raw amino-acid sequence, 582 residues long: Two-component response regulator ORR26 (582 aa).

Residues 11–126 (RVLVVDDDPT…ELRNIWQHVY (116 aa)) enclose the Response regulatory domain. Position 62 is a 4-aspartylphosphate (Asp-62). The segment covering 166-182 (SDTMRKRKDVDKDHADQ) has biased composition (basic and acidic residues). The segment at 166–187 (SDTMRKRKDVDKDHADQESSDG) is disordered. Positions 189–248 (TVKKARVVWSVDLHQKFVNAVNQIGFDKVGPKKILDLMNVPGLTRENVASHLQKYRLYLS) form a DNA-binding region, myb-like GARP.

The protein belongs to the ARR family. Type-B subfamily. Post-translationally, two-component system major event consists of a His-to-Asp phosphorelay between a sensor histidine kinase (HK) and a response regulator (RR). In plants, the His-to-Asp phosphorelay involves an additional intermediate named Histidine-containing phosphotransfer protein (HPt). This multistep phosphorelay consists of a His-Asp-His-Asp sequential transfer of a phosphate group between first a His and an Asp of the HK protein, followed by the transfer to a conserved His of the HPt protein and finally the transfer to an Asp in the receiver domain of the RR protein.

The protein resides in the nucleus. Functionally, transcriptional activator that binds specific DNA sequence. Functions as a response regulator involved in His-to-Asp phosphorelay signal transduction system. Phosphorylation of the Asp residue in the receiver domain activates the ability of the protein to promote the transcription of target genes. May directly activate some type-A response regulators in response to cytokinins. The chain is Two-component response regulator ORR26 from Oryza sativa subsp. japonica (Rice).